The following is a 177-amino-acid chain: Putative HTH-type transcriptional regulator YvaV (177 aa).

A DNA-binding region (H-T-H motif) is located at residues 49–73 (LTELSEATGMSKTRMSQVVREMLDA).

Belongs to the GbsR family.

This chain is Putative HTH-type transcriptional regulator YvaV (yvaV), found in Bacillus subtilis (strain 168).